The sequence spans 260 residues: Winged helix repair factor 1 (260 aa).

Winged helix domain stretches follow at residues 38–110, 126–185, and 186–260; these read FTED…MVVM, SRAT…LAVP, and GAGR…ISET.

It belongs to the STK19 family. Monomer in solution. Homodimer; when bound to DNA. Component of a transcription-coupled nucleotide excision repair (TC-NER) complex which assembles and interacts with the multiprotein RNA polymerase II complex when it stalls at DNA lesions.

The protein resides in the nucleus. In terms of biological role, DNA-binding protein which is required for efficient transcription-coupled nucleotide excision repair (TC-NER). Acts as part of a TC-NER complex which assembles and interacts with RNA polymerase II (RNAPII) when it stalls at DNA lesions. In Xenopus laevis (African clawed frog), this protein is Winged helix repair factor 1.